The primary structure comprises 270 residues: Tryptophan synthase alpha chain (270 aa).

Residues E49 and D60 each act as proton acceptor in the active site.

It belongs to the TrpA family. As to quaternary structure, tetramer of two alpha and two beta chains.

The enzyme catalyses (1S,2R)-1-C-(indol-3-yl)glycerol 3-phosphate + L-serine = D-glyceraldehyde 3-phosphate + L-tryptophan + H2O. Its pathway is amino-acid biosynthesis; L-tryptophan biosynthesis; L-tryptophan from chorismate: step 5/5. Its function is as follows. The alpha subunit is responsible for the aldol cleavage of indoleglycerol phosphate to indole and glyceraldehyde 3-phosphate. The polypeptide is Tryptophan synthase alpha chain (Paraburkholderia phytofirmans (strain DSM 17436 / LMG 22146 / PsJN) (Burkholderia phytofirmans)).